An 883-amino-acid polypeptide reads, in one-letter code: DNA mismatch repair protein MutS (883 aa).

Positions 1–25 are disordered; that stretch reads MSDSVAPDVPVIREGKNPAQHRDRT. The segment covering 11 to 25 has biased composition (basic and acidic residues); sequence VIREGKNPAQHRDRT. 664 to 671 provides a ligand contact to ATP; it reads GPNASGKS. Positions 857-883 are disordered; it reads RKGNTQPRARKSSAETEAKTQQFELPF.

The protein belongs to the DNA mismatch repair MutS family.

This protein is involved in the repair of mismatches in DNA. It is possible that it carries out the mismatch recognition step. This protein has a weak ATPase activity. This chain is DNA mismatch repair protein MutS, found in Acaryochloris marina (strain MBIC 11017).